The sequence spans 249 residues: NAD(P)H-quinone oxidoreductase subunit K (249 aa).

Residues cysteine 65, cysteine 66, cysteine 130, and cysteine 161 each coordinate [4Fe-4S] cluster.

Belongs to the complex I 20 kDa subunit family. As to quaternary structure, NDH-1 can be composed of about 15 different subunits; different subcomplexes with different compositions have been identified which probably have different functions. [4Fe-4S] cluster is required as a cofactor.

It is found in the cellular thylakoid membrane. It carries out the reaction a plastoquinone + NADH + (n+1) H(+)(in) = a plastoquinol + NAD(+) + n H(+)(out). The catalysed reaction is a plastoquinone + NADPH + (n+1) H(+)(in) = a plastoquinol + NADP(+) + n H(+)(out). Its function is as follows. NDH-1 shuttles electrons from an unknown electron donor, via FMN and iron-sulfur (Fe-S) centers, to quinones in the respiratory and/or the photosynthetic chain. The immediate electron acceptor for the enzyme in this species is believed to be plastoquinone. Couples the redox reaction to proton translocation, and thus conserves the redox energy in a proton gradient. Cyanobacterial NDH-1 also plays a role in inorganic carbon-concentration. The sequence is that of NAD(P)H-quinone oxidoreductase subunit K from Prochlorococcus marinus (strain NATL2A).